We begin with the raw amino-acid sequence, 134 residues long: Small ribosomal subunit protein uS11 (134 aa).

This sequence belongs to the universal ribosomal protein uS11 family. Part of the 30S ribosomal subunit. Interacts with proteins S7 and S18. Binds to IF-3.

Functionally, located on the platform of the 30S subunit, it bridges several disparate RNA helices of the 16S rRNA. Forms part of the Shine-Dalgarno cleft in the 70S ribosome. The polypeptide is Small ribosomal subunit protein uS11 (Corynebacterium glutamicum (strain R)).